The primary structure comprises 292 residues: 33 kDa chaperonin (292 aa).

2 cysteine pairs are disulfide-bonded: Cys230-Cys232 and Cys263-Cys266.

Belongs to the HSP33 family. In terms of processing, under oxidizing conditions two disulfide bonds are formed involving the reactive cysteines. Under reducing conditions zinc is bound to the reactive cysteines and the protein is inactive.

It is found in the cytoplasm. Redox regulated molecular chaperone. Protects both thermally unfolding and oxidatively damaged proteins from irreversible aggregation. Plays an important role in the bacterial defense system toward oxidative stress. The polypeptide is 33 kDa chaperonin (Salmonella paratyphi A (strain ATCC 9150 / SARB42)).